Consider the following 101-residue polypeptide: MFVKKGDKVRVIAGKDKGTEAVVLKALPKVNKVVVEGVAIIKKHQKPSAENPQGAIVEKEAPIHASNVQVLDKNGVAGRVGYKVVDGKKVRYNKKSGEVLD.

This sequence belongs to the universal ribosomal protein uL24 family. In terms of assembly, part of the 50S ribosomal subunit.

Functionally, one of two assembly initiator proteins, it binds directly to the 5'-end of the 23S rRNA, where it nucleates assembly of the 50S subunit. Its function is as follows. One of the proteins that surrounds the polypeptide exit tunnel on the outside of the subunit. In Streptococcus thermophilus (strain ATCC BAA-491 / LMD-9), this protein is Large ribosomal subunit protein uL24.